The following is a 98-amino-acid chain: uncharacterized protein (98 aa).

A run of 2 helical transmembrane segments spans residues 2-22 (IVTLLNALSAMAAFTAAGLWW) and 70-90 (AAKAAALAAACQGTAIALPIL).

The protein localises to the cell membrane. This is an uncharacterized protein from Sinorhizobium fredii (strain NBRC 101917 / NGR234).